The chain runs to 275 residues: Putative hydro-lyase SPO1111 (275 aa).

This sequence belongs to the D-glutamate cyclase family.

The sequence is that of Putative hydro-lyase SPO1111 from Ruegeria pomeroyi (strain ATCC 700808 / DSM 15171 / DSS-3) (Silicibacter pomeroyi).